We begin with the raw amino-acid sequence, 1072 residues long: Translation initiation factor IF-2 (1072 aa).

2 disordered regions span residues 55 to 369 and 426 to 452; these read ILDK…TGTA and ELVDVSKNKERGQRKRTSGDTQSVSKQ. Low complexity-rich tracts occupy residues 91-100, 108-118, 126-179, and 186-212; these read AEASQAAEPA, EPATFAAEEPV, APRA…AEVA, and EAPQAPVEAPRAAVPAPAAAQPRPSVQ. Residues 218-230 are compositionally biased toward pro residues; that stretch reads PQPPPRSPVPPAV. A compositionally biased stretch (low complexity) spans 231 to 245; that stretch reads RTPSSTSSSATVVSR. Over residues 253–307 the composition is skewed to gly residues; it reads QRGGPGGGRPGGPGGPGGRPGGPGGPGGRPGGPGGPGGRPGGPGGPGGRPGGPGG. A compositionally biased stretch (basic and acidic residues) spans 426 to 436; it reads ELVDVSKNKER. The tr-type G domain maps to 570 to 737; sequence PRPPVVAIMG…NLALQAEVLE (168 aa). The tract at residues 579–586 is G1; sequence GHVDHGKT. Residue 579–586 participates in GTP binding; sequence GHVDHGKT. Residues 604–608 form a G2 region; the sequence is GITQH. The G3 stretch occupies residues 625–628; sequence DTPG. Residues 625–629 and 679–682 contribute to the GTP site; these read DTPGH and NKMD. The interval 679 to 682 is G4; the sequence is NKMD. The segment at 715-717 is G5; sequence SAK.

This sequence belongs to the TRAFAC class translation factor GTPase superfamily. Classic translation factor GTPase family. IF-2 subfamily.

It is found in the cytoplasm. Its function is as follows. One of the essential components for the initiation of protein synthesis. Protects formylmethionyl-tRNA from spontaneous hydrolysis and promotes its binding to the 30S ribosomal subunits. Also involved in the hydrolysis of GTP during the formation of the 70S ribosomal complex. The chain is Translation initiation factor IF-2 from Myxococcus xanthus (strain DK1622).